Here is a 404-residue protein sequence, read N- to C-terminus: Cysteine desulfurase IscS (404 aa).

Pyridoxal 5'-phosphate contacts are provided by residues 75 to 76 (AT), asparagine 155, glutamine 183, and 203 to 205 (SAH). An N6-(pyridoxal phosphate)lysine modification is found at lysine 206. Threonine 243 is a pyridoxal 5'-phosphate binding site. Cysteine 328 serves as the catalytic Cysteine persulfide intermediate. Cysteine 328 contacts [2Fe-2S] cluster.

This sequence belongs to the class-V pyridoxal-phosphate-dependent aminotransferase family. NifS/IscS subfamily. As to quaternary structure, homodimer. Forms a heterotetramer with IscU, interacts with other sulfur acceptors. Pyridoxal 5'-phosphate is required as a cofactor.

It localises to the cytoplasm. The enzyme catalyses (sulfur carrier)-H + L-cysteine = (sulfur carrier)-SH + L-alanine. The protein operates within cofactor biosynthesis; iron-sulfur cluster biosynthesis. Functionally, master enzyme that delivers sulfur to a number of partners involved in Fe-S cluster assembly, tRNA modification or cofactor biosynthesis. Catalyzes the removal of elemental sulfur atoms from cysteine to produce alanine. Functions as a sulfur delivery protein for Fe-S cluster synthesis onto IscU, an Fe-S scaffold assembly protein, as well as other S acceptor proteins. The sequence is that of Cysteine desulfurase IscS from Pseudomonas fluorescens (strain Pf0-1).